Here is a 124-residue protein sequence, read N- to C-terminus: Large ribosomal subunit protein bL12 (124 aa).

This sequence belongs to the bacterial ribosomal protein bL12 family. Homodimer. Part of the ribosomal stalk of the 50S ribosomal subunit. Forms a multimeric L10(L12)X complex, where L10 forms an elongated spine to which 2 to 4 L12 dimers bind in a sequential fashion. Binds GTP-bound translation factors.

Its function is as follows. Forms part of the ribosomal stalk which helps the ribosome interact with GTP-bound translation factors. Is thus essential for accurate translation. This Brucella abortus (strain S19) protein is Large ribosomal subunit protein bL12.